The following is a 154-amino-acid chain: MTDQIYYETMYILRPDIAEDEVTNHIDKYNKLLEESGGKILDSQMRGKRRLAYQIAKHREGIYVQLSHQGDGQHIFKIEKAMRLSEDVIRYLTVKQEGPLPTPRSSNKGYNQSEKKDIESIDSTNKSEFKEEANDKKTATSESTSSQGKESQKS.

The interval 94-154 (VKQEGPLPTP…SSQGKESQKS (61 aa)) is disordered. Polar residues predominate over residues 103-112 (PRSSNKGYNQ). Residues 113-139 (SEKKDIESIDSTNKSEFKEEANDKKTA) are compositionally biased toward basic and acidic residues. Positions 140-154 (TSESTSSQGKESQKS) are enriched in polar residues.

This sequence belongs to the bacterial ribosomal protein bS6 family.

Functionally, binds together with bS18 to 16S ribosomal RNA. The polypeptide is Small ribosomal subunit protein bS6 (Prochlorococcus marinus subsp. pastoris (strain CCMP1986 / NIES-2087 / MED4)).